Consider the following 128-residue polypeptide: Glycine cleavage system H protein (128 aa).

The Lipoyl-binding domain maps to 24–106 (LVRIGISEFA…HGEGWLLIIR (83 aa)). Lysine 65 is subject to N6-lipoyllysine.

The protein belongs to the GcvH family. In terms of assembly, the glycine cleavage system is composed of four proteins: P, T, L and H. Requires (R)-lipoate as cofactor.

The glycine cleavage system catalyzes the degradation of glycine. The H protein shuttles the methylamine group of glycine from the P protein to the T protein. This is Glycine cleavage system H protein from Prochlorococcus marinus (strain NATL1A).